The sequence spans 271 residues: NADPH-dependent 7-cyano-7-deazaguanine reductase (271 aa).

81–83 provides a ligand contact to substrate; that stretch reads IES. Position 83–84 (83–84) interacts with NADPH; that stretch reads SK. Residue cysteine 177 is the Thioimide intermediate of the active site. The Proton donor role is filled by aspartate 184. 216-217 is a substrate binding site; sequence HE. 245–246 serves as a coordination point for NADPH; the sequence is RG.

It belongs to the GTP cyclohydrolase I family. QueF type 2 subfamily. In terms of assembly, homodimer.

Its subcellular location is the cytoplasm. It carries out the reaction 7-aminomethyl-7-carbaguanine + 2 NADP(+) = 7-cyano-7-deazaguanine + 2 NADPH + 3 H(+). It functions in the pathway tRNA modification; tRNA-queuosine biosynthesis. Its function is as follows. Catalyzes the NADPH-dependent reduction of 7-cyano-7-deazaguanine (preQ0) to 7-aminomethyl-7-deazaguanine (preQ1). The protein is NADPH-dependent 7-cyano-7-deazaguanine reductase of Xanthomonas campestris pv. campestris (strain B100).